The following is a 522-amino-acid chain: Maturase K (522 aa).

This sequence belongs to the intron maturase 2 family. MatK subfamily.

The protein localises to the plastid. It is found in the chloroplast. In terms of biological role, usually encoded in the trnK tRNA gene intron. Probably assists in splicing its own and other chloroplast group II introns. This is Maturase K from Tigridia pavonia (Mexican shell flower).